Here is a 262-residue protein sequence, read N- to C-terminus: Adenosylcobinamide-GDP ribazoletransferase (262 aa).

A run of 6 helical transmembrane segments spans residues 43-63 (YFGL…WLTQ), 66-86 (LPAG…TGGF), 120-140 (GALA…ELAL), 146-166 (AGSA…SIIF), 191-211 (LLIL…LAAL), and 242-262 (AAQQ…GNIL).

The protein belongs to the CobS family. It depends on Mg(2+) as a cofactor.

The protein resides in the cell inner membrane. The enzyme catalyses alpha-ribazole + adenosylcob(III)inamide-GDP = adenosylcob(III)alamin + GMP + H(+). It carries out the reaction alpha-ribazole 5'-phosphate + adenosylcob(III)inamide-GDP = adenosylcob(III)alamin 5'-phosphate + GMP + H(+). It functions in the pathway cofactor biosynthesis; adenosylcobalamin biosynthesis; adenosylcobalamin from cob(II)yrinate a,c-diamide: step 7/7. In terms of biological role, joins adenosylcobinamide-GDP and alpha-ribazole to generate adenosylcobalamin (Ado-cobalamin). Also synthesizes adenosylcobalamin 5'-phosphate from adenosylcobinamide-GDP and alpha-ribazole 5'-phosphate. This Shewanella baltica (strain OS185) protein is Adenosylcobinamide-GDP ribazoletransferase.